An 838-amino-acid chain; its full sequence is V-type proton ATPase 116 kDa subunit a 1 (838 aa).

Residues 1–388 (MGELFRSEEM…DAYGIGTYRE (388 aa)) lie on the Cytoplasmic side of the membrane. Phosphothreonine is present on residues Thr250 and Thr360. Phosphotyrosine is present on Tyr364. The helical transmembrane segment at 389–407 (INPAPYTVITFPFLFAVMF) threads the bilayer. Over 408 to 409 (GD) the chain is Vacuolar. A helical membrane pass occupies residues 410-426 (FGHGILMTLFAVWMVLR). Residues 427 to 441 (ESRILSQKNENEMFS) lie on the Cytoplasmic side of the membrane. Residues 442 to 471 (MVFSGRYIILLMGLFSIYTGLIYNDCFSKS) traverse the membrane as a helical segment. Residues 472 to 535 (LNIFGSSWSV…ATNKLTFLNS (64 aa)) are Vacuolar-facing. Residues 536 to 555 (FKMKMSVILGIIHMLFGVSL) traverse the membrane as a helical segment. At 556 to 573 (SLFNHIYFKKPLNIYFGF) the chain is on the cytoplasmic side. The helical transmembrane segment at 574-594 (IPEIIFMSSLFGYLVILIFYK) threads the bilayer. Topologically, residues 595–639 (WTAYDAHSSRNAPSLLIHFINMFLFSYPESGNAMLYSGQKGIQCF) are vacuolar. The chain crosses the membrane as a helical span at residues 640–659 (LIVVAMLCVPWMLLFKPLIL). The Cytoplasmic portion of the chain corresponds to 660–725 (RHQYLRKKHL…DTMVHQAIHT (66 aa)). The helical transmembrane segment at 726–750 (IEYCLGCISNTASYLRLWALSLAHA) threads the bilayer. The Vacuolar segment spans residues 751-771 (QLSEVLWTMVIHIGLHVRSLA). Residues 772–810 (GGLGLFFIFAAFATLTVAILLIMEGLSAFLHALRLHWVE) form a helical membrane-spanning segment. Residues 811 to 838 (FQNKFYTGTGFKFLPFSFEHIREGKFDE) lie on the Cytoplasmic side of the membrane.

Belongs to the V-ATPase 116 kDa subunit family. V-ATPase is a heteromultimeric enzyme made up of two complexes: the ATP-hydrolytic V1 complex and the proton translocation V0 complex. The V1 complex consists of three catalytic AB heterodimers that form a heterohexamer, three peripheral stalks each consisting of EG heterodimers, one central rotor including subunits D and F, and the regulatory subunits C and H. The proton translocation complex V0 consists of the proton transport subunit a, a ring of proteolipid subunits c9c'', rotary subunit d, subunits e and f, and the accessory subunits ATP6AP1/Ac45 and ATP6AP2/PRR. Interacts with SPAAR. In terms of tissue distribution, expressed in brain (at protein level). As to expression, expressed in heart, kidney, liver, spleen, and to a lesser extent in brain.

Its subcellular location is the cytoplasmic vesicle. The protein resides in the clathrin-coated vesicle membrane. It is found in the secretory vesicle. It localises to the synaptic vesicle membrane. The protein localises to the melanosome. Functionally, subunit of the V0 complex of vacuolar(H+)-ATPase (V-ATPase), a multisubunit enzyme composed of a peripheral complex (V1) that hydrolyzes ATP and a membrane integral complex (V0) that translocates protons. V-ATPase is responsible for the acidification of various organelles, such as lysosomes, endosomes, the trans-Golgi network, and secretory granules, including synaptic vesicles. In certain cell types, can be exported to the plasma membrane, where it is involved in the acidification of the extracellular environment. Required for assembly and activity of the vacuolar ATPase. Through its action on compartment acidification, plays an essential role in neuronal development in terms of integrity and connectivity of neurons. The sequence is that of V-type proton ATPase 116 kDa subunit a 1 (Atp6v0a1) from Rattus norvegicus (Rat).